Reading from the N-terminus, the 161-residue chain is Nucleotide-binding protein Veis_3464 (161 aa).

Belongs to the YajQ family.

In terms of biological role, nucleotide-binding protein. In Verminephrobacter eiseniae (strain EF01-2), this protein is Nucleotide-binding protein Veis_3464.